Here is a 37-residue protein sequence, read N- to C-terminus: uncharacterized protein (37 aa).

Residues 13-33 (TFLTIIVLLMIVFGIAIVALL) form a helical membrane-spanning segment.

The protein resides in the host membrane. This is an uncharacterized protein from Acidianus convivator (ABV).